Here is a 202-residue protein sequence, read N- to C-terminus: Protein GrpE (202 aa).

Residues 1–14 are compositionally biased toward polar residues; sequence MENTQENPTSQNPT. A disordered region spans residues 1–58; it reads MENTQENPTSQNPTPADEAARQAAEAASGEPQDQARQPAAAAGEQPAQAQPAGAEAAL. Low complexity predominate over residues 21–58; sequence RQAAEAASGEPQDQARQPAAAAGEQPAQAQPAGAEAAL.

Belongs to the GrpE family. Homodimer.

It localises to the cytoplasm. In terms of biological role, participates actively in the response to hyperosmotic and heat shock by preventing the aggregation of stress-denatured proteins, in association with DnaK and GrpE. It is the nucleotide exchange factor for DnaK and may function as a thermosensor. Unfolded proteins bind initially to DnaJ; upon interaction with the DnaJ-bound protein, DnaK hydrolyzes its bound ATP, resulting in the formation of a stable complex. GrpE releases ADP from DnaK; ATP binding to DnaK triggers the release of the substrate protein, thus completing the reaction cycle. Several rounds of ATP-dependent interactions between DnaJ, DnaK and GrpE are required for fully efficient folding. This is Protein GrpE from Paraburkholderia phymatum (strain DSM 17167 / CIP 108236 / LMG 21445 / STM815) (Burkholderia phymatum).